Consider the following 1123-residue polypeptide: uncharacterized protein (1123 aa).

This is an uncharacterized protein from Ictaluridae (bullhead catfishes).